Consider the following 358-residue polypeptide: MDGFSGGIDINIFDGNSTENGSGDFEDFIEPCFMQENSDFNRIFLPTIYSFIFLLGIIGNGLVVVVMGYQKKSRTMTDKYRLHLSVADLLFVFTLPFWSVDAAIGWYFKEFLCKAVHVIYTVNLYSSVLILAFISLDRYLAIVHATNSQGSRKMLADKVVYAGVWLPALLLTVPDLVFASVSNENGQFVCDRIYPIDNRETWTVGFRFLHITVGLILPGLIILVCYCVIISKLSHSKGHQKRKALKTTVILILAFFACWLPYYVCLTTDTFMMLGLVKADCIWENTLHKAISITEALAFFHCCLNPILYAFLGAKFKKSAQNAFTSVSRGSSLKILSKKRAGLSSVSTESESSSFHSS.

The interval 1 to 25 (MDGFSGGIDINIFDGNSTENGSGDF) is important for chemokine binding and signaling. Residues 1-44 (MDGFSGGIDINIFDGNSTENGSGDFEDFIEPCFMQENSDFNRIF) are Extracellular-facing. Residues Asn16 and Asn20 are each glycosylated (N-linked (GlcNAc...) asparagine). 2 disulfides stabilise this stretch: Cys32-Cys281 and Cys113-Cys190. The helical transmembrane segment at 45–67 (LPTIYSFIFLLGIIGNGLVVVVM) threads the bilayer. The Cytoplasmic segment spans residues 68 to 81 (GYQKKSRTMTDKYR). A helical membrane pass occupies residues 82–103 (LHLSVADLLFVFTLPFWSVDAA). The interval 98–101 (WSVD) is chemokine binding. Topologically, residues 104-114 (IGWYFKEFLCK) are extracellular. The chain crosses the membrane as a helical span at residues 115–134 (AVHVIYTVNLYSSVLILAFI). Positions 117–121 (HVIYT) are chemokine binding. The Cytoplasmic portion of the chain corresponds to 135-158 (SLDRYLAIVHATNSQGSRKMLADK). The tract at residues 139–151 (YLAIVHATNSQGS) is involved in dimerization; when bound to chemokine. A helical membrane pass occupies residues 159 to 178 (VVYAGVWLPALLLTVPDLVF). Residues 179 to 202 (ASVSNENGQFVCDRIYPIDNRETW) lie on the Extracellular side of the membrane. The segment at 190–194 (CDRIY) is chemokine binding, important for signaling. A helical transmembrane segment spans residues 203–223 (TVGFRFLHITVGLILPGLIIL). Topologically, residues 224-248 (VCYCVIISKLSHSKGHQKRKALKTT) are cytoplasmic. The chain crosses the membrane as a helical span at residues 249 to 268 (VILILAFFACWLPYYVCLTT). The Extracellular segment spans residues 269–289 (DTFMMLGLVKADCIWENTLHK). A helical transmembrane segment spans residues 290-309 (AISITEALAFFHCCLNPILY). At 310-358 (AFLGAKFKKSAQNAFTSVSRGSSLKILSKKRAGLSSVSTESESSSFHSS) the chain is on the cytoplasmic side. The tract at residues 338 to 358 (KKRAGLSSVSTESESSSFHSS) is disordered. The span at 344–358 (SSVSTESESSSFHSS) shows a compositional bias: low complexity.

The protein belongs to the G-protein coupled receptor 1 family. Monomer. Can form dimers. Sulfation is required for efficient binding of cxcl12/sdf-1alpha and promotes its dimerization. Post-translationally, O- and N-glycosylated.

It is found in the cell membrane. The protein localises to the cytoplasm. It localises to the nucleus. Its subcellular location is the early endosome. The protein resides in the late endosome. It is found in the lysosome. Receptor for the C-X-C chemokine cxcl12/sdf-1. Transduces a signal by increasing the intracellular level of calcium ions. Signaling with cxcl12/sdf-1 mediates the directional movement of mesodermal cells during gastrulation. May play a role in the migration of embryonic presumptive primordial germ cells (pPGCs). May also be involved in regulating migration of hematopoietic stem cells into the larval liver. The protein is C-X-C chemokine receptor type 4-B (cxcr4-b) of Xenopus laevis (African clawed frog).